Consider the following 643-residue polypeptide: Phosphomethylpyrimidine synthase (643 aa).

Substrate contacts are provided by residues Asn248, Met277, Tyr306, His342, 362-364, 403-406, and Glu442; these read SRG and DGLR. His446 contacts Zn(2+). Position 469 (Tyr469) interacts with substrate. A Zn(2+)-binding site is contributed by His510. Residues Cys590, Cys593, and Cys598 each contribute to the [4Fe-4S] cluster site.

This sequence belongs to the ThiC family. Homodimer. It depends on [4Fe-4S] cluster as a cofactor.

It carries out the reaction 5-amino-1-(5-phospho-beta-D-ribosyl)imidazole + S-adenosyl-L-methionine = 4-amino-2-methyl-5-(phosphooxymethyl)pyrimidine + CO + 5'-deoxyadenosine + formate + L-methionine + 3 H(+). It functions in the pathway cofactor biosynthesis; thiamine diphosphate biosynthesis. In terms of biological role, catalyzes the synthesis of the hydroxymethylpyrimidine phosphate (HMP-P) moiety of thiamine from aminoimidazole ribotide (AIR) in a radical S-adenosyl-L-methionine (SAM)-dependent reaction. The sequence is that of Phosphomethylpyrimidine synthase from Paraburkholderia phymatum (strain DSM 17167 / CIP 108236 / LMG 21445 / STM815) (Burkholderia phymatum).